The primary structure comprises 349 residues: UDP-3-O-acylglucosamine N-acyltransferase (349 aa).

His243 (proton acceptor) is an active-site residue.

The protein belongs to the transferase hexapeptide repeat family. LpxD subfamily. In terms of assembly, homotrimer.

The enzyme catalyses a UDP-3-O-[(3R)-3-hydroxyacyl]-alpha-D-glucosamine + a (3R)-hydroxyacyl-[ACP] = a UDP-2-N,3-O-bis[(3R)-3-hydroxyacyl]-alpha-D-glucosamine + holo-[ACP] + H(+). The protein operates within bacterial outer membrane biogenesis; LPS lipid A biosynthesis. Functionally, catalyzes the N-acylation of UDP-3-O-acylglucosamine using 3-hydroxyacyl-ACP as the acyl donor. Is involved in the biosynthesis of lipid A, a phosphorylated glycolipid that anchors the lipopolysaccharide to the outer membrane of the cell. This is UDP-3-O-acylglucosamine N-acyltransferase from Myxococcus xanthus (strain DK1622).